Reading from the N-terminus, the 521-residue chain is MRLHAFTLLSLLGLVPSFAAASLSGSVGPLTSASAKAAKKTCNVLDYGAKADKKTDLGPPLAAAFAACKSGGLVYIPAGDYAMSTWVKLANGKAWALQIDGVIYRTGTDGGNMIMIEHTSDFELYSSTSSGAMQGLGYEFHASNNWSGPRLLRLWDVSDFSVHDLILVDSPSFHFSIDTCSNGEVYNMAIRGGNHGGLDGVDVWSTNIWIHDLEVTNKDECVTVKSPAKNILVENIYCNLSGGCAMGSLGADTDISDITYKNIYTWNSNQMMMIKSNGGSGTVSNVVFENFIGHGNAYSLDIDSFWSSMSAVSGDGVTLNNITIKNWKGTEANGAQRGPIKIICPDKVPCYNILIEDFAMWTETGSKQWYSCQSAYGSGFCLKSGSHHTSYAVTTTTVSSAPSGYSAAKMASDLSTDFGSTKSIPIPTIPTSFYPGATPYSALMSKQSTKAAKARAVDMSVETPAAASRSEQVVQGAPQETGQSAPESAGPVPSGNPGPVPTGGSRPSRHRHGHHHFGSAI.

An N-terminal signal peptide occupies residues 1–21 (MRLHAFTLLSLLGLVPSFAAA). Residues Cys42 and Cys68 are joined by a disulfide bond. Asn145 carries N-linked (GlcNAc...) asparagine glycosylation. The active-site Proton donor is Asp219. A disulfide bond links Cys221 and Cys238. Asn239 carries N-linked (GlcNAc...) asparagine glycosylation. The active site involves His294. Asn321 carries N-linked (GlcNAc...) asparagine glycosylation. 2 disulfide bridges follow: Cys344–Cys350 and Cys372–Cys381. The segment at 462 to 521 (ETPAAASRSEQVVQGAPQETGQSAPESAGPVPSGNPGPVPTGGSRPSRHRHGHHHFGSAI) is disordered. Over residues 469 to 486 (RSEQVVQGAPQETGQSAP) the composition is skewed to polar residues. Over residues 507-521 (PSRHRHGHHHFGSAI) the composition is skewed to basic residues.

It belongs to the glycosyl hydrolase 28 family.

Its subcellular location is the secreted. The enzyme catalyses Endohydrolysis of alpha-D-GalA-(1-&gt;2)-alpha-L-Rha glycosidic bond in the rhamnogalacturonan I backbone with initial inversion of anomeric configuration releasing oligosaccharides with beta-D-GalA at the reducing end.. Its function is as follows. Pectinolytic enzymes consist of four classes of enzymes: pectine lyase, polygalacturonase, pectin methylesterase and rhamnogalacturonase. Hydrolyzes alpha-D-galacturonopyranosyl-(1,2)-alpha-L-rhamnopyranosyl linkages in the backbone of the hairy regions of pectins. The chain is Probable rhamnogalacturonase B (rhgB) from Aspergillus fumigatus (strain CBS 144.89 / FGSC A1163 / CEA10) (Neosartorya fumigata).